Here is a 1230-residue protein sequence, read N- to C-terminus: Soluble starch synthase 3, chloroplastic/amyloplastic (1230 aa).

The transit peptide at 1 to 60 (MDVPFPLHRSLSCTSVSNAITHLKIKPILGFVSHGTTSLSVQSSSWRKDGMVTGVSFSIC) directs the protein to the chloroplast. The segment at 66 to 189 (RRRRKVSTPR…KDAVKLNKSK (124 aa)) is disordered. The segment covering 124 to 145 (VEARVETSDDDTKGVVRDHKFL) has biased composition (basic and acidic residues). Residues 152–170 (NGSTKSISMSPVRVSSQFV) are compositionally biased toward polar residues. Residues 177–189 (GDDKDAVKLNKSK) are compositionally biased toward basic and acidic residues. Lys-794 contacts ADP-alpha-D-glucose.

The protein belongs to the glycosyltransferase 1 family. Bacterial/plant glycogen synthase subfamily. As to expression, tuber, sink and source leaves.

The protein localises to the plastid. It localises to the chloroplast. The protein resides in the amyloplast. It catalyses the reaction [(1-&gt;4)-alpha-D-glucosyl](n) + ADP-alpha-D-glucose = [(1-&gt;4)-alpha-D-glucosyl](n+1) + ADP + H(+). Its pathway is glycan biosynthesis; starch biosynthesis. In terms of biological role, may account for most of the soluble starch synthase activity in the tubers. Contributes only a tiny percentage of the granule-bound activity, but may also contribute to the deposition of transient starch in chloroplasts of leaves. This Solanum tuberosum (Potato) protein is Soluble starch synthase 3, chloroplastic/amyloplastic (SS3).